A 267-amino-acid chain; its full sequence is 2-keto-3-deoxy-L-rhamnonate aldolase (267 aa).

His49 functions as the Proton acceptor in the catalytic mechanism. Residue Gln151 participates in substrate binding. Glu153 is a binding site for Mg(2+). Substrate is bound by residues Ala178 and Asp179. Asp179 contributes to the Mg(2+) binding site.

It belongs to the HpcH/HpaI aldolase family. KDR aldolase subfamily. In terms of assembly, homohexamer. Mg(2+) serves as cofactor.

It catalyses the reaction 2-dehydro-3-deoxy-L-rhamnonate = (S)-lactaldehyde + pyruvate. Catalyzes the reversible retro-aldol cleavage of 2-keto-3-deoxy-L-rhamnonate (KDR) to pyruvate and lactaldehyde. This Escherichia coli O17:K52:H18 (strain UMN026 / ExPEC) protein is 2-keto-3-deoxy-L-rhamnonate aldolase.